The following is a 506-amino-acid chain: Acetaldehyde dehydrogenase (506 aa).

Active-site residues include E262 and C301.

This sequence belongs to the aldehyde dehydrogenase family.

It catalyses the reaction acetaldehyde + NAD(+) + H2O = acetate + NADH + 2 H(+). It functions in the pathway alcohol metabolism; ethanol degradation; acetate from ethanol: step 2/2. Its function is as follows. Catalyzes the NAD(+)-dependent oxidation of acetaldehyde to acetate. Is likely a component of the ethanol oxidation system that allows P.aeruginosa to grow on ethanol as the sole carbon and energy source. The polypeptide is Acetaldehyde dehydrogenase (Pseudomonas aeruginosa).